The sequence spans 186 residues: Ribosome-recycling factor (186 aa).

This sequence belongs to the RRF family.

The protein localises to the cytoplasm. Functionally, responsible for the release of ribosomes from messenger RNA at the termination of protein biosynthesis. May increase the efficiency of translation by recycling ribosomes from one round of translation to another. This chain is Ribosome-recycling factor, found in Janthinobacterium sp. (strain Marseille) (Minibacterium massiliensis).